A 259-amino-acid polypeptide reads, in one-letter code: Phosphatidylglycerol--prolipoprotein diacylglyceryl transferase (259 aa).

The next 4 membrane-spanning stretches (helical) occupy residues Leu16–Ala36, Phe55–Tyr75, Glu92–Cys112, and Ile117–Gly137. Arg138 contacts a 1,2-diacyl-sn-glycero-3-phospho-(1'-sn-glycerol). The next 3 membrane-spanning stretches (helical) occupy residues Gln172–Phe192, Gly201–Phe221, and Ile228–Leu248.

This sequence belongs to the Lgt family.

It localises to the cell inner membrane. The enzyme catalyses L-cysteinyl-[prolipoprotein] + a 1,2-diacyl-sn-glycero-3-phospho-(1'-sn-glycerol) = an S-1,2-diacyl-sn-glyceryl-L-cysteinyl-[prolipoprotein] + sn-glycerol 1-phosphate + H(+). Its pathway is protein modification; lipoprotein biosynthesis (diacylglyceryl transfer). In terms of biological role, catalyzes the transfer of the diacylglyceryl group from phosphatidylglycerol to the sulfhydryl group of the N-terminal cysteine of a prolipoprotein, the first step in the formation of mature lipoproteins. In Rickettsia rickettsii (strain Iowa), this protein is Phosphatidylglycerol--prolipoprotein diacylglyceryl transferase.